A 267-amino-acid polypeptide reads, in one-letter code: Small ribosomal subunit protein uS10m (267 aa).

A mitochondrion-targeting transit peptide spans 1–10 (MLSRILGVRN).

It belongs to the universal ribosomal protein uS10 family. In terms of assembly, part of the mitochondrial small ribosomal subunit.

It localises to the mitochondrion. Its function is as follows. Involved in mitochondrial genome encoded proteins translation. Involved in the binding of tRNA to the ribosomes. In Debaryomyces hansenii (strain ATCC 36239 / CBS 767 / BCRC 21394 / JCM 1990 / NBRC 0083 / IGC 2968) (Yeast), this protein is Small ribosomal subunit protein uS10m (RSM10).